The primary structure comprises 382 residues: Ferredoxin--NADP reductase, root isozyme 2, chloroplastic (382 aa).

Residues 1–64 (MSHSAVSQAG…DGKRYPSTTI (64 aa)) constitute a chloroplast transit peptide. In terms of domain architecture, FAD-binding FR-type spans 97 to 225 (KESYTAKIVS…TGPSGKVMLL (129 aa)). Cys200 and Cys205 are joined by a disulfide. The residue at position 201 (Ser201) is a Phosphoserine. Thr233 carries the post-translational modification Phosphothreonine. 235 to 253 (IMIATGTGVAPYRGYLRRM) provides a ligand contact to NADP(+).

It belongs to the ferredoxin--NADP reductase type 1 family. It depends on FAD as a cofactor. In terms of tissue distribution, expressed in shoots and roots. More abundant in roots than RFNR1.

It is found in the plastid. It localises to the chloroplast. The catalysed reaction is 2 reduced [2Fe-2S]-[ferredoxin] + NADP(+) + H(+) = 2 oxidized [2Fe-2S]-[ferredoxin] + NADPH. In terms of biological role, maintains the supply of reduced ferredoxin under non-photosynthetic conditions. The sequence is that of Ferredoxin--NADP reductase, root isozyme 2, chloroplastic (RFNR2) from Arabidopsis thaliana (Mouse-ear cress).